We begin with the raw amino-acid sequence, 400 residues long: Aspartate aminotransferase (400 aa).

Positions 42 and 180 each coordinate L-aspartate. Position 241 is an N6-(pyridoxal phosphate)lysine (K241). Residue R373 participates in L-aspartate binding.

It belongs to the class-I pyridoxal-phosphate-dependent aminotransferase family. As to quaternary structure, homodimer. Pyridoxal 5'-phosphate serves as cofactor.

The protein resides in the cytoplasm. The catalysed reaction is L-aspartate + 2-oxoglutarate = oxaloacetate + L-glutamate. The chain is Aspartate aminotransferase (aspC) from Sulfolobus acidocaldarius (strain ATCC 33909 / DSM 639 / JCM 8929 / NBRC 15157 / NCIMB 11770).